The sequence spans 328 residues: Phosphate acyltransferase (328 aa).

Belongs to the PlsX family. In terms of assembly, homodimer. Probably interacts with PlsY.

The protein localises to the cytoplasm. It carries out the reaction a fatty acyl-[ACP] + phosphate = an acyl phosphate + holo-[ACP]. It functions in the pathway lipid metabolism; phospholipid metabolism. Functionally, catalyzes the reversible formation of acyl-phosphate (acyl-PO(4)) from acyl-[acyl-carrier-protein] (acyl-ACP). This enzyme utilizes acyl-ACP as fatty acyl donor, but not acyl-CoA. The sequence is that of Phosphate acyltransferase from Staphylococcus saprophyticus subsp. saprophyticus (strain ATCC 15305 / DSM 20229 / NCIMB 8711 / NCTC 7292 / S-41).